Consider the following 328-residue polypeptide: Mannitol-1-phosphate 5-dehydrogenase (328 aa).

Leucine 3–glycine 14 lines the NAD(+) pocket.

Belongs to the mannitol dehydrogenase family.

It catalyses the reaction D-mannitol 1-phosphate + NAD(+) = beta-D-fructose 6-phosphate + NADH + H(+). This is Mannitol-1-phosphate 5-dehydrogenase (mtlD) from Mycoplasma mycoides subsp. mycoides SC (strain CCUG 32753 / NCTC 10114 / PG1).